A 78-amino-acid chain; its full sequence is Acyl carrier protein (78 aa).

One can recognise a Carrier domain in the interval 1–76; it reads MALFEDIQAV…DVVKYIEDNK (76 aa). Serine 36 carries the O-(pantetheine 4'-phosphoryl)serine modification.

It belongs to the acyl carrier protein (ACP) family. Post-translationally, 4'-phosphopantetheine is transferred from CoA to a specific serine of apo-ACP by AcpS. This modification is essential for activity because fatty acids are bound in thioester linkage to the sulfhydryl of the prosthetic group.

Its subcellular location is the cytoplasm. The protein operates within lipid metabolism; fatty acid biosynthesis. Carrier of the growing fatty acid chain in fatty acid biosynthesis. The chain is Acyl carrier protein from Helicobacter pylori (strain G27).